The chain runs to 593 residues: Mitosis inducer protein kinase cdr1 (593 aa).

Residues W12 to L258 enclose the Protein kinase domain. Residues L18 to V26 and K41 contribute to the ATP site. D128 functions as the Proton acceptor in the catalytic mechanism. S550 carries the phosphoserine modification.

It belongs to the protein kinase superfamily. CAMK Ser/Thr protein kinase family. NIM1 subfamily. As to quaternary structure, interacts with msp1.

The enzyme catalyses L-seryl-[protein] + ATP = O-phospho-L-seryl-[protein] + ADP + H(+). It catalyses the reaction L-threonyl-[protein] + ATP = O-phospho-L-threonyl-[protein] + ADP + H(+). Its function is as follows. This protein, a dose-dependent mitotic inducer, appears to function as a negative regulator of mitosis inhibitor wee1 by phosphorylating and inactivating it. The sequence is that of Mitosis inducer protein kinase cdr1 (cdr1) from Schizosaccharomyces pombe (strain 972 / ATCC 24843) (Fission yeast).